The following is a 724-amino-acid chain: Disks large homolog 4 (724 aa).

2 S-palmitoyl cysteine lipidation sites follow: C3 and C5. Residues 15-35 are disordered; the sequence is QDEDTPPLEHSPAHLPNQANS. PDZ domains lie at 65–151 and 160–246; these read EITL…VMRR and EIKL…VAKP. S73 and S142 each carry phosphoserine. Y240 carries the phosphotyrosine modification. A Phosphoserine modification is found at S295. Residues 313-393 form the PDZ 3 domain; it reads RIVIHRGSTG…QTVTIIAQYK (81 aa). A phosphoserine mark is found at S415 and S418. The residue at position 420 (T420) is a Phosphothreonine. Residues S422, S425, S449, and S480 each carry the phosphoserine modification. Positions 428-498 constitute an SH3 domain; it reads KRGFYIRALF…PSKRRVERRE (71 aa). Residues 534–709 enclose the Guanylate kinase-like domain; that stretch reads ARPIIILGPT…IYHKVKRVIE (176 aa). Phosphotyrosine is present on Y580. S606 and S654 each carry phosphoserine. Y715 carries the post-translational modification Phosphotyrosine.

The protein belongs to the MAGUK family. Interacts through its PDZ domains with ANO2 and NETO1. Interacts with KCNJ4. Interacts through its first two PDZ domains with GRIN2A, GRIN2B, GRIN2C and GRIN2D. Interacts with ERBB4. Interacts with KCNA1, KCNA2, KCNA3 and KCNA4. Interacts with LRRC4 and LRRC4B. Interacts with SYNGAP1. Interacts with ASIC3. Interacts with SEMA4C. Interacts with CXADR. Interacts with KCND2. Interacts (via first PDZ domain) with CRIPT. Interacts through its first PDZ domain with GRIK2 and KCNA4. Interacts through its second PDZ domain with the PDZ domain of NOS1 or the C-terminus of CAPON. Interacts through its third PDZ domain with NLGN1 and CRIPT, and probably with NLGN2 and NLGN3. Interacts through its guanylate kinase-like domain with DLGAP1/GKAP, DLGAP2, DLGAP3, DLGAP4, MAP1A, BEGAIN and SIPA1L1. Interacts through its guanylate kinase-like domain with KIF13B. Isoform 2 interacts through an L27 domain with HGS/HRS and the first L27 domain of CASK. Interacts with ANKS1B. Interacts with ADR1B. May interact with HTR2A. Interacts with ADAM22, KLHL17 and LGI1. Interacts with FRMPD4 (via C-terminus). Interacts with LRFN1 and LRFN2. Interacts with LRFN4. Interacts (via N-terminal tandem pair of PDZ domains) with GPER1 (via C-terminus tail motif); the interaction is direct and induces the increase of GPER1 protein levels residing at the plasma membrane surface in a estradiol-independent manner. Interacts (via N-terminus tandem pair of PDZ domains) with NOS1 (via N-terminal domain). Interacts with SHANK3. Interacts with GPR85. Interacts with CACNG2 and MPP2 (via the SH3-Guanylate kinase-like sub-module). Interacts with ADGRB1. Found in a complex with PRR7 and GRIN1. Interacts (via PDZ3 domain and to lesser degree via PDZ2 domain) with PRR7. Component of the postsynaptic hippocampal AMPA-type glutamate receptor (AMPAR) complex, at least composed of pore forming AMPAR subunits GRIA1, GRIA2 and GRIA3 and AMPAR auxiliary proteins SHISA6 and SHISA7. Interacts (via its first two PDZ domains) with SHISA6 and SHISA7 (via PDZ-binding motif); the interaction is direct. Interacts (via PDZ domain 2) with SEMA4F (via PDZ-binding motif); this interaction may promote translocation of DLG4/SAP90 to the membrane. Interacts with RPH3A and GRIN2A; this ternary complex regulates NMDA receptor composition at postsynaptic membranes. Interacts with ABR and BCR. Interacts with DGKI (via PDZ-binding motif); controls the localization of DGKI to the synapse. Interacts with C9orf72, SMCR8 and RAB39B. Interacts with ZDHHC5. Interacts with PTEN (via PDZ domain-binding motif); the interaction is induced by NMDA and is required for PTEN location at postsynaptic density. Found in a complex with GRIA1, GRIA2, GRIA3, GRIA4, CACNG8 and CNIH2. Interacts with FAM81A; the interaction facilitates condensate formation via liquid-liquid phase separation. Interacts with ADGRL3. Interacts with SORCS3. Palmitoylated. Palmitoylation is required for targeting to postsynaptic density, plasma membrane and synapses. Palmitoylation by ZDHHC2 occurs when the synaptic activity decreases and induces DLG4 synaptic clustering. Palmitoylation by ZDHHC15 regulates trafficking to the postsynaptic density and function in synaptogenesis. Palmitoylation may play a role in glutamate receptor GRIA1 synapse clustering. Depalmitoylated by ABHD17A and ABHD17B and to a lesser extent by ABHD17C, ABHD12, ABHD13, LYPLA1 and LYPLA2. Undergoes rapid synaptic palmitoylation/depalmitoylation cycle during neuronal development which slows down in mature neurons. In terms of processing, ubiquitinated by MDM2 in response to NMDA receptor activation, leading to proteasome-mediated degradation of DLG4 which is required for AMPA receptor endocytosis. Expressed in brain (at protein level). Detected in juxtaparanodal zones in the central nervous system and at nerve terminal plexuses of basket cells in the cerebellum. Expressed in cerebrum. Expressed in hippocampal neurons (at protein level). Isoform 1 and isoform 2: highly expressed in cerebellum, cortex, hippocampus, and corpus striatum.

The protein localises to the cell membrane. The protein resides in the postsynaptic density. It is found in the synapse. It localises to the cytoplasm. Its subcellular location is the cell projection. The protein localises to the axon. The protein resides in the dendritic spine. It is found in the dendrite. It localises to the presynapse. Functionally, postsynaptic scaffolding protein that plays a critical role in synaptogenesis and synaptic plasticity by providing a platform for the postsynaptic clustering of crucial synaptic proteins. Interacts with the cytoplasmic tail of NMDA receptor subunits and shaker-type potassium channels. Required for synaptic plasticity associated with NMDA receptor signaling. Overexpression or depletion of DLG4 changes the ratio of excitatory to inhibitory synapses in hippocampal neurons. May reduce the amplitude of ASIC3 acid-evoked currents by retaining the channel intracellularly. May regulate the intracellular trafficking of ADR1B. Also regulates AMPA-type glutamate receptor (AMPAR) immobilization at postsynaptic density keeping the channels in an activated state in the presence of glutamate and preventing synaptic depression. Under basal conditions, cooperates with FYN to stabilize palmitoyltransferase ZDHHC5 at the synaptic membrane through FYN-mediated phosphorylation of ZDHHC5 and its subsequent inhibition of association with endocytic proteins. The chain is Disks large homolog 4 from Rattus norvegicus (Rat).